Consider the following 149-residue polypeptide: Large ribosomal subunit protein bL9 (149 aa).

This sequence belongs to the bacterial ribosomal protein bL9 family.

Binds to the 23S rRNA. The protein is Large ribosomal subunit protein bL9 of Xanthomonas axonopodis pv. citri (strain 306).